Here is a 589-residue protein sequence, read N- to C-terminus: EZH inhibitory protein (589 aa).

3 disordered regions span residues 1 to 46 (MASS…LRLR), 61 to 548 (AGED…SGPN), and 561 to 589 (LDSSSPRVPGEEIEAAPHTREEEDKKCRG). 2 stretches are compositionally biased toward gly residues: residues 29–38 (GPRGRGGPSG) and 105–114 (PKGGGKADQG). The segment covering 147-161 (GAAGPPLPGARGSPA) has biased composition (low complexity). The segment covering 193-204 (LRSSTSQGSGST) has biased composition (polar residues). Low complexity-rich tracts occupy residues 299–308 (RSSASAVSPE), 325–334 (RSSASVVSPE), 351–360 (RSSASVVSPE), and 374–390 (PRATPRVPVAPSSTTRS). Residue Ser306 is modified to Phosphoserine. A compositionally biased stretch (basic and acidic residues) spans 426–437 (MRLDLQVDREPE). Over residues 438–449 (SEAEQEEQELES) the composition is skewed to acidic residues. A compositionally biased stretch (low complexity) spans 450 to 465 (EPGPSSRPQASRSSSR). The sufficient for interaction with EZH2 stretch occupies residues 482–490 (RRPVRMRAS). Positions 484-503 (PVRMRASSPSPPGRLYPLPK) are necessary and sufficient for inhibition of PRC2/EED-EZH1 and PRC2/EED-EZH2 complex activity. Over residues 509–547 (VHSPSSSSSESSSVSSSHSPLNKAPDPGSSPPLSSLSGP) the composition is skewed to low complexity. The segment covering 575-589 (AAPHTREEEDKKCRG) has biased composition (basic and acidic residues).

Interacts with PRC2/EED-EZH1 complex member EZH1 and with PRC2/EED-EZH2 complex member EZH2; the interaction blocks EZH1/EZH2 methyltransferase activity. Interacts (via C-terminus) with SUZ12 which is a member of the PRC2/EED-EZH1 and PRC2/EED-EZH2 complexes. Highly expressed in ovary with lower expression in testis and very low levels in other tissues tested including prostate, brain, kidney, spleen and liver. During spermatogenesis, expressed mainly in spermatogonia with very low expression in spermatocytes I and II.

Its subcellular location is the nucleus. It is found in the cytoplasm. In terms of biological role, inhibits PRC2/EED-EZH1 and PRC2/EED-EZH2 complex function by inhibiting EZH1/EZH2 methyltransferase activity, thereby causing down-regulation of histone H3 trimethylation at 'Lys-27' (H3K27me3). Probably inhibits methyltransferase activity by limiting the stimulatory effect of cofactors such as AEBP2 and JARID2. Inhibits H3K27me3 deposition during spermatogenesis and oogenesis. This is EZH inhibitory protein from Mus musculus (Mouse).